Here is a 69-residue protein sequence, read N- to C-terminus: MKKLFIVMIKFYRKYISPLKRPCCRFYPTCSQYALEAIQKYGAFKGGFMSIGRILRCNPFCKGGYDPVK.

The protein belongs to the UPF0161 family.

The protein resides in the cell membrane. Its function is as follows. Could be involved in insertion of integral membrane proteins into the membrane. This chain is Putative membrane protein insertion efficiency factor, found in Clostridium perfringens (strain SM101 / Type A).